Consider the following 164-residue polypeptide: Interleukin-31 (164 aa).

A signal peptide spans 1 to 23; it reads MASHSGPSTSVLFLFCCLGGWLA. N-linked (GlcNAc...) asparagine glycosylation is found at Asn67 and Asn100.

Detected at low levels in testis, bone marrow, skeletal muscle, kidney, colon, thymus, small intestine and trachea.

Its subcellular location is the secreted. Its function is as follows. Activates STAT3 and possibly STAT1 and STAT5 through the IL31 heterodimeric receptor composed of IL31RA and OSMR. May function in skin immunity. Enhances myeloid progenitor cell survival in vitro. Induces RETNLA and serum amyloid A protein expression in macrophages. The chain is Interleukin-31 (IL31) from Homo sapiens (Human).